A 626-amino-acid chain; its full sequence is MRERSQDSQAGLTLYVGLFGHLGMLHRTKYSRFRNESITSLDEGSPGGSVGNKGSSPPPYPALAPHLPTEDATVSSQESPTALCTLIPRMASMKLANPITFLGLKTFCLGTKQVSRLKLQENQDQTPSRPASPESNLNRTGPAPAPDPDQVGRRPTSLRPDTCPLPGPGEPSPRSKQDGPPLQHLLGNGLNYCVRYMGCIEVLQSMRSLDFGMRTQVTREAISRLCEAVPGAHGAIKKRKAPVKFLTTVLGKSNLQFSGMNIKLTVSTSSLTLMNLDNQQIIANHQMQSISFASGGDPDTTDYVAYVAKDPVNQRACHILECRSGMAQDVISTIGQAFELRFKQYLKNPSLNTWEREEVLVDGAPEDRDHDYYNSIPGKQPPEGGISDVRIQAQATDQMAYCPIRCEKLCYLPGNSTCSGVYKNCMGRSRPIGIPHERAGQGDTPSLRHFWRVDLFDDPCYVNTQALQSMHSYAGNQSSALPQGSPWHLGKAPETVQPGATAKPGSALALPHIRQQLWDEECFHGKLSRGAAEKLLVKDGDFLVRESVTSPGQFVLSGLQGGQAKHLLLVDPEGKVRTKDHVFDNVGHLIKYHMDNNLPIISSGSEVRLKQPIRKYDNTGLLPPKK.

Residues 1-185 form a CH2 region; that stretch reads MRERSQDSQA…KQDGPPLQHL (185 aa). Disordered stretches follow at residues 38 to 76 and 119 to 182; these read ITSLDEGSPGGSVGNKGSSPPPYPALAPHLPTEDATVSS and LQEN…GPPL. The span at 120 to 139 shows a compositional bias: polar residues; sequence QENQDQTPSRPASPESNLNR. Positions 186–369 constitute a PID domain; sequence LGNGLNYCVR…LVDGAPEDRD (184 aa). Residues 370–521 form a CH1 region; the sequence is HDYYNSIPGK…HIRQQLWDEE (152 aa). Tyr-422 carries the post-translational modification Phosphotyrosine. Residues 522 to 613 form the SH2 domain; that stretch reads CFHGKLSRGA…GSEVRLKQPI (92 aa).

As to quaternary structure, interacts (via PID domain) with phosphorylated MUSK (via NPXY motif); undergoes tyrosine phosphorylation downstream of activated MUSK. Interacts with GRB2; the interaction is dependent of Tyr-422 phosphorylation and increased by EGF. In terms of processing, phosphorylated; the phosphorylation is enhanced by EGF. Phosphorylation at Tyr-422 is required for the interaction with GRB2. Expressed in both brain and skeletal muscle; widely expressed in brain namely olfactory bulb, cortex, hippocampus, striatum, thalamus, and brain stem (at protein level). Only expressed in melanomas. Weakly expressed in normal melanocytes and benign nevi. Highly expressed at the transition from radial growth phase to vertical growth phase and metastatic melanomas, when tumor cells acquire migratory competence and invasive potential.

It is found in the postsynaptic cell membrane. Activates both Ras-dependent and Ras-independent migratory pathways in melanomas. Contributes to the early phases of agrin-induced tyrosine phosphorylation of CHRNB1. In Mus musculus (Mouse), this protein is SHC-transforming protein 4 (Shc4).